Here is a 220-residue protein sequence, read N- to C-terminus: Meiotic nuclear division protein 1 homolog (220 aa).

Positions 76-147 form a coiled coil; the sequence is SKALHARKRR…KVEIEKYQEC (72 aa).

It belongs to the MND1 family.

The protein resides in the nucleus. In terms of biological role, required for proper homologous chromosome pairing and efficient cross-over and intragenic recombination during meiosis. Stimulates both DMC1- and RAD51-mediated homologous strand assimilation, which is required for the resolution of meiotic double-strand breaks. This is Meiotic nuclear division protein 1 homolog from Danio rerio (Zebrafish).